The chain runs to 434 residues: MTHLLTIHTQVEGEITALAFGGAGILRYHGFVIFVPFTAPGDQIICRIIEIKKSFAVAELVKLKQPSSLRVQPPCPYFGKCGGCQLQHLNEQTQLNYKLTAITDTLKRIGHLKVPSVEMNTAQLNWAYRRHITLHLKSFNQSFQAGYIATDHFSLISIDTCPIFNNLHDPIISILQKFISTLPNPNQQDGRLTLLKNQNSQYILSFQFCSLNELNRILFQEALEKYPIFSGILVTSPKKQWIIGNPYSEQKIENLIFRFTPQAFIQNHPEQSLYIYKKICSLTIQLKSKKILDLYCGFGITSLLLASQGHFVTGIEYNSDAIRFAKENSKLNHLPHVEFLEGDVEKILPICLKSQKCVDLVIVNPPRIGLSKSVIKILMSALPEDMIYISCMPSTLARDLSILCEDLYEIHECTAYDMFPQTSHVETLVHLKKV.

In terms of domain architecture, TRAM spans 4 to 62; sequence LLTIHTQVEGEITALAFGGAGILRYHGFVIFVPFTAPGDQIICRIIEIKKSFAVAELVK. [4Fe-4S] cluster is bound by residues Cys-75, Cys-81, Cys-84, and Cys-161. S-adenosyl-L-methionine is bound by residues Gln-266, Tyr-295, Glu-316, and Asn-364. Cys-391 serves as the catalytic Nucleophile.

It belongs to the class I-like SAM-binding methyltransferase superfamily. RNA M5U methyltransferase family.

This is an uncharacterized protein from Protochlamydia amoebophila (strain UWE25).